The chain runs to 130 residues: Small ribosomal subunit protein bS6 (130 aa).

Residues 99–130 form a disordered region; that stretch reads ASPMVKAKDERRERHDFASEANDDSEAGDSEE. The segment covering 104–116 has biased composition (basic and acidic residues); that stretch reads KAKDERRERHDFA. Residues 119–130 are compositionally biased toward acidic residues; it reads ANDDSEAGDSEE.

Belongs to the bacterial ribosomal protein bS6 family.

Binds together with bS18 to 16S ribosomal RNA. This is Small ribosomal subunit protein bS6 from Yersinia enterocolitica serotype O:8 / biotype 1B (strain NCTC 13174 / 8081).